We begin with the raw amino-acid sequence, 227 residues long: 7-cyano-7-deazaguanine synthase (227 aa).

Position 10-20 (10-20) interacts with ATP; sequence LSGGLDSCVAT. Residues C193, C201, C204, and C207 each coordinate Zn(2+).

The protein belongs to the QueC family. Zn(2+) is required as a cofactor.

The enzyme catalyses 7-carboxy-7-deazaguanine + NH4(+) + ATP = 7-cyano-7-deazaguanine + ADP + phosphate + H2O + H(+). Its pathway is purine metabolism; 7-cyano-7-deazaguanine biosynthesis. Functionally, catalyzes the ATP-dependent conversion of 7-carboxy-7-deazaguanine (CDG) to 7-cyano-7-deazaguanine (preQ(0)). The sequence is that of 7-cyano-7-deazaguanine synthase from Methanobrevibacter smithii (strain ATCC 35061 / DSM 861 / OCM 144 / PS).